Consider the following 755-residue polypeptide: 1,4-alpha-glucan branching enzyme GlgB (755 aa).

Aspartate 431 acts as the Nucleophile in catalysis. Glutamate 484 acts as the Proton donor in catalysis.

The protein belongs to the glycosyl hydrolase 13 family. GlgB subfamily. As to quaternary structure, monomer.

The enzyme catalyses Transfers a segment of a (1-&gt;4)-alpha-D-glucan chain to a primary hydroxy group in a similar glucan chain.. The protein operates within glycan biosynthesis; glycogen biosynthesis. Functionally, catalyzes the formation of the alpha-1,6-glucosidic linkages in glycogen by scission of a 1,4-alpha-linked oligosaccharide from growing alpha-1,4-glucan chains and the subsequent attachment of the oligosaccharide to the alpha-1,6 position. The chain is 1,4-alpha-glucan branching enzyme GlgB from Prochlorococcus marinus (strain NATL2A).